Here is a 443-residue protein sequence, read N- to C-terminus: Diels-Alderase poxQ (443 aa).

The signal sequence occupies residues 1–23 (MARIPLEFLSITLPVLLLAYCLA). 3 N-linked (GlcNAc...) asparagine glycosylation sites follow: N78, N97, and N145.

Belongs to the Diels-Alderase family.

The protein operates within secondary metabolite biosynthesis. Diels-Alderase; part of the gene cluster that mediates the biosynthesis of oxaleimides, cytotoxic compounds containing an unusual disubstituted succinimide moiety. The first step of the pathway is provided by the HR-PKS poxF that serves in a new mode of collaborative biosynthesis with the PKS-NRPS poxE, by providing the olefin containing amino acid substrate via the synthesis of an ACP-bound dec-4-enoate. The cytochrome P450 monooxygenase poxM-catalyzed oxidation at the alpha-position creates the enzyme-bound 2-hydroxydec-4-enoyl-ACP thioester, which may be prone to spontaneous hydrolysis to yield 2-hydroxydec-4-enoic acid due to increased electrophilicity of the carbonyl. 2-hydroxydec-4-enoic acid can then be further oxidized by poxM to yield the alpha-ketoacid 2-oxodec-4-enoicacid, which is reductively aminated by the aminotransferase poxL to yield (S,E)-2-aminodec-4-enoic acid. The Hybrid PKS-NRPS synthetase poxE then performs condensation between the octaketide product of its PKS modules and the amino group of (S,E)-2-aminodec-4-enoic acid which is activated and incorporated by the adenylation domain. The resulting aminoacyl product can be cyclized by the Diels-Alderase PoxQ and reductively released by the reductive (R) domain of poxE to yield an aldehyde intermediate. The released aldehyde is then substrate for a Knoevenagel condensation by the hydrolyase poxO followed by an oxidation at the 5-position of the pyrrolidone ring. The presence of the olefin from the amino acid building block allows for migration of the substituted allyl group to occur. This allylic transposition reaction takes place in a conjugate addition, semipinacol-like fashion to yield a succinimide intermediate. Iterative two-electron oxidations of the C7 methyl of the succinimide intermediate to the carboxylic acid can be catalyzed by one of two remaining cytochrome P450 monooxygenasess poxC or poxD to yield oxaleimide A. Subsequent oxidation yields the maleimide scaffold oxaleimide I. Both oxaleimide A and oxaleimide I can undergo oxidative modifications in the decalin ring to yield the series of products oxaleimides B to H. This chain is Diels-Alderase poxQ, found in Penicillium oxalicum.